The chain runs to 319 residues: Formimidoylglutamase (319 aa).

Mn(2+) is bound by residues asparagine 127, aspartate 150, histidine 152, aspartate 154, aspartate 242, and aspartate 244.

Belongs to the arginase family. It depends on Mn(2+) as a cofactor.

The enzyme catalyses N-formimidoyl-L-glutamate + H2O = formamide + L-glutamate. The protein operates within amino-acid degradation; L-histidine degradation into L-glutamate; L-glutamate from N-formimidoyl-L-glutamate (hydrolase route): step 1/1. Its function is as follows. Catalyzes the conversion of N-formimidoyl-L-glutamate to L-glutamate and formamide. The protein is Formimidoylglutamase of Bacillus subtilis (strain 168).